We begin with the raw amino-acid sequence, 62 residues long: Temporin-La (62 aa).

The first 22 residues, 1 to 22 (MFPLKKSLLLLFFLGTINLSFC), serve as a signal peptide directing secretion. Positions 23-47 (EEERDVDQDERRDDPGERNVQVEKR) are excised as a propeptide. Residue L60 is modified to Leucine amide.

This sequence belongs to the frog skin active peptide (FSAP) family. Temporin subfamily. In terms of tissue distribution, expressed by the skin glands.

It is found in the secreted. The protein resides in the target cell membrane. Functionally, antimicrobial peptide with amphipathic alpha-helical structure that acts against both Gram-positive and Gram-negative bacteria and the fungus Candida albicans. Is active against S.aureus ATCC 25923 (MIC=2.5 ug/ml), S.suis 2 CVCC 606 (MIC=15.6 ug/ml), Salmonella ATCC 20020 (MIC=15.6 ug/ml), P.aeruginosa ATCC 227853 (MIC=60 ug/ml), and C.albicans ATCC10231 (MIC=31.25 ug/ml). Is not active against B.subtilis ADB403, E.coli ATCC 25922, and K.pneumoniae ATCC 700603. Also shows a strong antitumor activity, but no hemolytic activity. This Aquarana catesbeiana (American bullfrog) protein is Temporin-La.